The following is a 431-amino-acid chain: Adenylosuccinate synthetase (431 aa).

GTP contacts are provided by residues 12-18 (GDEGKGK) and 40-42 (GHT). Catalysis depends on Asp-13, which acts as the Proton acceptor. Residues Asp-13 and Gly-40 each contribute to the Mg(2+) site. IMP-binding positions include 13 to 16 (DEGK), 38 to 41 (NAGH), Thr-130, Arg-144, Gln-225, Thr-240, and Arg-304. The Proton donor role is filled by His-41. 300–306 (STTGRPR) contributes to the substrate binding site. GTP-binding positions include Arg-306, 332-334 (KMD), and 414-416 (SIG).

Belongs to the adenylosuccinate synthetase family. In terms of assembly, homodimer. Mg(2+) serves as cofactor.

Its subcellular location is the cytoplasm. It carries out the reaction IMP + L-aspartate + GTP = N(6)-(1,2-dicarboxyethyl)-AMP + GDP + phosphate + 2 H(+). Its pathway is purine metabolism; AMP biosynthesis via de novo pathway; AMP from IMP: step 1/2. Functionally, plays an important role in the de novo pathway of purine nucleotide biosynthesis. Catalyzes the first committed step in the biosynthesis of AMP from IMP. This is Adenylosuccinate synthetase from Syntrophotalea carbinolica (strain DSM 2380 / NBRC 103641 / GraBd1) (Pelobacter carbinolicus).